A 338-amino-acid chain; its full sequence is MENLDALVAQALEAVQHSEDVNALEQLRVHYLGKKGELTQLMQTLGKLSAEERPKAGALINTAKNSVQEALNTRKADLESAALTAKLAAERIDVTLPGRGQASGGLHPVTRTLERVEQFFTRIGYSVAEGPEVEDDYHNFEALNIPGHHPARAMHDTFYFNANMLLRTHTSPVQVRTMESSQPPIRIVCPGRVYRCDSDITHSPMFHQVEGLLIDEGISFADLKGTIEEFLRVFFEKPLGVRFRPSFFPFTEPSAEVDMQCVICGGHGCRVCKHTGWLEVMGCGMVHPNVLGMSGIDPEKYQGFAFGMGVERLAMLRYGVNDLRLFFDNDLRFLAQFR.

Glu252 provides a ligand contact to Mg(2+).

This sequence belongs to the class-II aminoacyl-tRNA synthetase family. Phe-tRNA synthetase alpha subunit type 1 subfamily. Tetramer of two alpha and two beta subunits. The cofactor is Mg(2+).

It localises to the cytoplasm. It catalyses the reaction tRNA(Phe) + L-phenylalanine + ATP = L-phenylalanyl-tRNA(Phe) + AMP + diphosphate + H(+). The protein is Phenylalanine--tRNA ligase alpha subunit of Azotobacter vinelandii (strain DJ / ATCC BAA-1303).